The following is a 3343-amino-acid chain: MTIRIFFSIFLLNHLIFFHLFNFTHQFSEETIKFSVSEDAKLNTIIGHLEAEIGYTYRLSRGNSKIKFDEQTLELSVSSPLDRESENAIDMLIITSPPSIIHILIDVLDVNDNSPIFPIDVQRVEIPETAPIGWRVQISGATDPDEGKNGTIGKYELVDSLATVDTMSPFGIVQSDGFLFLEVTGKLDRETRDLYSMRLTAIDQGVPELSSSCHLNILILDINDNPPNFGIRSLTLNWNGLPNTKLFSLNATDLDSNENSLLTYRILPSGPTSEMFSISDENILVTQNNTECLQRCEFVVEARDSGVPPLSTTLNIVVNMEYGNEHEPNINIRFYPSDYPFIIVQPEDVNGKTLAILSITDSDGPLGANSTIWIENGNEQSIFSLISRQSINILTVKHVENANQEQYILEFRANDGQSPADRITRKELKIFFKKYVKSTQIHVERESHVTVEKDTVPGSFVAHVETNCTDMCSFELANSDVFKIDPFNGIIVTSSILPEGVTSYHLPIRIHLPPPSTQLVEADVFVKVIQESVPKNLIRSSESPIHLKRAYTFTTWQDVSLGTVIGRLPKAQIYSTIDTVSELGVFPDGSVFVGKTITSDFVTLPVTLVNRNTTQTSIITLIVKPLNQHSPICQITEIHVLENAPIGTIFGRIQARDEDSGLSGVVSYKILTKSDDYDGIFHLDSTSGSLRSLKAFDAEKKRSYTFEYEAKDLGTPSKTTNCPATIFIEDVNDNVPKFGSRYYTATISGKSNETVAIVQANDNDVDVKNQKLQYHLLNYHDFFQLDKETGKVTTIQDVPMTWQRLNISISAVNMDSERFLQSKTFLLVTVTSSSKLAVQLNSGNLIRIFKNDKIGEKVGHLDIASSETVYWSTLDPRLHVDSSGNIILIRRNAKQASTGFDIILTSENGEKTEKVNFEVEFVDSERSEDVEKVMDIVLNENTTEVSNLMNDWKNWKISRVILENANNSGNNTFFLEHKKLWRTKNATVSNAYIILESEDQEGSPKSFKLLHVTTSPSPSSESSCISPAHLISPPSTVPLPSNCSNVKLQNLKTSLQIHENNLLIPTQSELINHVDLVSTQNSDMKPFMMTLIKDYLSEDVRFSTNNVLMLLSSIHPIGTSFGRVTAESGYRIRYYIVGTDKISIDADTGELILKERFYRNLNDILIVAVIPKGIAKAKITIEVIEDRLILPQSNFFIPSPPSFNSKSKIGKIPIDRDDVTIDVIDEHFYVRNFEIFVKRHFIPNSNFYDLKGTVKKGKLSAPISVTLFFGEKMKSREIRENELMFEIEENSPIGTVVGVVPNSDTTKYRLVDPTCGLLIDQEGIIRTTTVFDRENTSLLKTKMIEPSENRIWNLLIFIADVNDNKPKILNAPGRIIVYDDLNYKLEWEDLDAIASDVSFSIVDGDVFGNLEIEDSGVISLNSIPNESFNATIRIYDNRPPFKVHFDDVTIEFQVTQKLRAVTCEDAEFWMFFGNEDVGMLIASEIVTWRIVPQIGSDSFKIDPITGIIQSTPNTKPTSDIAKLKIQAISYDGERVGFCDVKIHIDKAAFVENVVLSNGTFEFNISETADRFTEVGKIVILGAGLEGSVFRIQDNDYNFTISPFDGTIFTNSPLDFENIKTYRFNITAGKSTSQVIIHVTDENDEAPRFITGDVVNLKVLEELDTVSYPLIIGSSIAEDLDEGQNGLVTYSILSGNTSLFAVNSTTGDILSLIPLDREESSLHELLIEAKDAGIPSLSATSKILIHVGDINDNTPEFELSSYFIKISENSKIGSKIIRILATDKDKDAELQYSLESNDEITIPFRINVATGWITVAGKVNREENEEFRFFVKVTDGEKSSKVIVEIHVEDFNDNHPMINDRNSDIFVPDPTRSVEIIHVINVHDLDKSDHLKFSLNNSNLNLSENGEITLKSPLQTAVPVRVTVSDDAGHVAFMEYLFHPHSRKHFPVFVEKLDTVSVREHDEQELAVFKANGDSIRYSIVSRCSDHLEMEKSTGILKTKSSLDAEEYSECLVFIIATTYFDNKPLSTITKATIKIVDINDNSPRFDQQLYRFNVTENSGPKLIGHVIARDIDRSSRVFYEIVGGDANHEFMVTESGQIESVRDLDRETKSEYHLIVEAIDDGKPRRRGNTTVIVTVLDEDDNAPRFSRIFHVEVPEDVRIGEPVIQLSASDADEHSNHRFELDGGGEGIPFRVDENTGMVFVNDSLDFEKKQSYRIKVKLTDGAWLIETSLFVNVKDVNDNAPIFEKPEYLFISEENSAEIGQFHASDMDSENNGKIRYSVTSPYFKIEPSTGVLSRFRQQLPQPLMSLKVTATDHGVPRLQKTVLAHLVDKSSFGKIKQRRIRETTKVGDVIGKKIDSGATIFPLDVATVTRDGDVVLKKNATQFWILENDTIYEFVKTDAMESTKNENITLNITSDISMNSDNFKVLRNGSLIVFGFSGNQAHLKIQCDDGFWPKQDRKIINLVVNNLDADRNSFPLARQPTIRKSMSLPKTMILNIPFDSPTGTIIWKNLENAVQYMENQKNVNFSNGSKNLILKTPLEETMQIDIFGQNFERSALTITPNRSLMACPVFQKNFYFFESVANLDSKHPTEIHNFGWSSDEIKGCQIDIFDKTHLFYQNGSSLIFLKPLLPGTYQFSLQIKSQSDSKIRSACHVVVTVIPPTNLTTWNIPSVIFATRNYNIPNLFHLPSGYSLSSDQRTFSLIGSGTGKNISKLSSGVYQVNVVGKDEKKEIVRILLDDVADDVTSKDIEYHVVSSTLSNLKIPTPIDVECFPRTEENLYEITKDCRLLFNSDVINTTIPVVTSPANSTWNLRIINESPETVKSLENNAVSLEIITQKSSIPRLITDLRVTYSDMKIYCLGTWQTSEDIKYHITFVIVDRNGVVIEESEARQTLTSFLKKHRPGYLDFVDFDKDPCDGVTCIQKNSTCQPTLVGDSASRLVSRSSSVIFDLPLKKLTARCFCSSGIDCYDDTTNETIQKTQKINVITTCDDIDCGPRGKCFMEESSQPICRCGQGFESMYSCERADDVFSMSTGGSVEISVRNGTSHLLKCSENCDGRDIQKIEFDFRTVQLEKSELFRVDFGKQVALIELIGGSLTFSITDAYARPIETRIEKRVNDGRWHRLLFQMSEDGRRISIQVNGRGKEVKSRVPLQMLFTAKKIQLMTPAAFCFRRLLAQNQFVHPILNRNKFFEISSTGTSRNECQFDSIQSGSGGFRLFSNFSNTTTLILLITLALISLIGFSVCLLAIRRRWRQKSPGDQKQTERSNGWTGHVMPRRRGHINRSMVKSPDDDTYDVATVYGMKSTSTDDITHIYTSSSSRRYQPPTAPSYRRDGHINMAYL.

A signal peptide spans 1-26 (MTIRIFFSIFLLNHLIFFHLFNFTHQ). An N-linked (GlcNAc...) asparagine glycan is attached at Asn-22. Residues 27 to 3228 (FSEETIKFSV…LFSNFSNTTT (3202 aa)) are Extracellular-facing. Cadherin domains follow at residues 28–117 (SEET…SPIF), 118–229 (PIDV…PPNF), and 242–330 (PNTK…EPNI). 6 N-linked (GlcNAc...) asparagine glycosylation sites follow: Asn-149, Asn-250, Asn-288, Asn-369, Asn-467, and Asn-612. Residues 632-738 (ICQITEIHVL…EDVNDNVPKF (107 aa)) form the Cadherin 4 domain. N-linked (GlcNAc...) asparagine glycans are attached at residues Asn-752, Asn-806, Asn-941, Asn-966, Asn-970, Asn-985, Asn-1042, Asn-1335, Asn-1425, Asn-1429, Asn-1557, Asn-1563, Asn-1597, Asn-1624, Asn-1695, and Asn-1702. The 90-residue stretch at 1279 to 1368 (RENELMFEIE…ADVNDNKPKI (90 aa)) folds into the Cadherin 5 domain. Cadherin domains are found at residues 1545-1648 (DKAA…APRF), 1676-1756 (AEDL…TPEF), and 1757-1857 (ELSS…HPMI). 2 N-linked (GlcNAc...) asparagine glycosylation sites follow: Asn-1895 and Asn-1900. 3 Cadherin domains span residues 1954-2045 (TVSV…SPRF), 2046-2145 (DQQL…NAPR), and 2146-2245 (FSRI…APIF). Asn-2053, Asn-2129, Asn-2203, Asn-2382, Asn-2391, Asn-2410, Asn-2414, Asn-2431, Asn-2527, Asn-2530, Asn-2564, Asn-2621, Asn-2665, Asn-2712, Asn-2798, Asn-2809, Asn-2927, Asn-2976, and Asn-3045 each carry an N-linked (GlcNAc...) asparagine glycan. The Laminin G-like domain occupies 3040 to 3205 (EISVRNGTSH…SSTGTSRNEC (166 aa)). The cysteines at positions 3172 and 3205 are disulfide-linked. N-linked (GlcNAc...) asparagine glycosylation is found at Asn-3222 and Asn-3225. The chain crosses the membrane as a helical span at residues 3229–3250 (LILLITLALISLIGFSVCLLAI). The Cytoplasmic segment spans residues 3251 to 3343 (RRRWRQKSPG…RDGHINMAYL (93 aa)). The segment at 3257-3277 (KSPGDQKQTERSNGWTGHVMP) is disordered.

Expressed in the anchor cell.

It is found in the cell membrane. It localises to the basolateral cell membrane. The protein localises to the cell junction. Functionally, cell adhesion protein involved in the control of epithelial morphogenesis. Together with metalloproteinase zmp-1 and hemicentin him-4, plays a role in anchor cell (AC) invasion during postembryonic vulval development. The polypeptide is Cadherin-3 (cdh-3) (Caenorhabditis elegans).